The following is a 247-amino-acid chain: O-methyltransferase imqG (247 aa).

Residues glutamate 84, 86–87, and alanine 138 each bind S-adenosyl-L-methionine; that span reads GT. A divalent metal cation-binding residues include aspartate 163, aspartate 189, and asparagine 190. Aspartate 163 contributes to the substrate binding site.

The protein belongs to the class I-like SAM-binding methyltransferase superfamily. Cation-dependent O-methyltransferase family. CCoAMT subfamily. Homodimer. A divalent metal cation serves as cofactor.

Its pathway is secondary metabolite biosynthesis. In terms of biological role, O-methyltransferase; part of the gene cluster that mediates the biosynthesis of imizoquins A to D, tripeptide-derived alkaloids that serve a protective role against oxidative stress that are essential for normal germination. ImqB is a canonical three-module NRPS that assembles the tripeptide backbone of the imizoquins via condensation of Trp, Tyr, and Leu-derived precursors. N-methylation by imqF and phenol oxidation by imqC, followed by cyclization via the FAD-dependent oxidase imqH carry out the three-step transformation of L-tyrosine into tetrahydroisoquinoline. Importantly, this sequence requires the presence of a free amine in the tyrosine moiety, indicating that isoquinoline formation occurs prior to peptide bond formation. The imidazolidin-4-one ring of imizoquins could form following additional oxidation of the methyl-derived bridgehead carbon by imqH. Lastly, O-methylation by imqG and leucine hydroxylation by imqE complete biosynthesis of the imizoquins. The polypeptide is O-methyltransferase imqG (Aspergillus flavus (strain ATCC 200026 / FGSC A1120 / IAM 13836 / NRRL 3357 / JCM 12722 / SRRC 167)).